We begin with the raw amino-acid sequence, 1076 residues long: Nickel and cobalt resistance protein CnrA (1076 aa).

12 helical membrane passes run 14-34 (WLVL…LNLL), 366-386 (TVAK…FALL), 390-410 (RAAT…AIGM), 418-438 (NLMS…VIIV), 475-495 (PTVY…TFQG), 502-522 (SPMV…SLTF), 561-581 (PMPF…AFTF), 903-923 (RLAI…YMAI), 928-948 (LTAT…FALL), 959-979 (AVGF…LISA), 1003-1023 (RPVL…AIAT), and 1035-1055 (TVVI…LPAL).

It belongs to the resistance-nodulation-cell division (RND) (TC 2.A.6) family.

The protein resides in the cell inner membrane. Its function is as follows. The products of the genes cnrA, cnrB, and cnrC are likely to form a membrane-bound protein complex catalyzing an energy-dependent efflux of Ni(2+) and Co(2+). The mechanism of action of the CnrCBA complex may be that of a proton/cation antiporter. This is Nickel and cobalt resistance protein CnrA (cnrA) from Cupriavidus metallidurans (strain ATCC 43123 / DSM 2839 / NBRC 102507 / CH34) (Ralstonia metallidurans).